The following is a 149-amino-acid chain: Large ribosomal subunit protein bL9 (149 aa).

This sequence belongs to the bacterial ribosomal protein bL9 family.

Binds to the 23S rRNA. The chain is Large ribosomal subunit protein bL9 from Helicobacter pylori (strain J99 / ATCC 700824) (Campylobacter pylori J99).